A 309-amino-acid chain; its full sequence is Ribonuclease Z (309 aa).

Zn(2+)-binding residues include H63, H65, D67, H68, H145, D216, and H274. D67 functions as the Proton acceptor in the catalytic mechanism.

The protein belongs to the RNase Z family. Homodimer. Requires Zn(2+) as cofactor.

The catalysed reaction is Endonucleolytic cleavage of RNA, removing extra 3' nucleotides from tRNA precursor, generating 3' termini of tRNAs. A 3'-hydroxy group is left at the tRNA terminus and a 5'-phosphoryl group is left at the trailer molecule.. In terms of biological role, zinc phosphodiesterase, which displays some tRNA 3'-processing endonuclease activity. Probably involved in tRNA maturation, by removing a 3'-trailer from precursor tRNA. In Streptococcus equi subsp. equi (strain 4047), this protein is Ribonuclease Z.